Here is a 331-residue protein sequence, read N- to C-terminus: 6-phosphogluconolactonase (331 aa).

K287 carries the post-translational modification N6-acetyllysine.

It belongs to the cycloisomerase 2 family.

It catalyses the reaction 6-phospho-D-glucono-1,5-lactone + H2O = 6-phospho-D-gluconate + H(+). It participates in carbohydrate degradation; pentose phosphate pathway; D-ribulose 5-phosphate from D-glucose 6-phosphate (oxidative stage): step 2/3. Functionally, catalyzes the hydrolysis of 6-phosphogluconolactone to 6-phosphogluconate. In Escherichia coli O7:K1 (strain IAI39 / ExPEC), this protein is 6-phosphogluconolactonase.